The sequence spans 1799 residues: Bromodomain and WD repeat-containing protein 3 (1799 aa).

8 WD repeats span residues isoleucine 170–threonine 209, arginine 213–leucine 251, alanine 255–tryptophan 297, arginine 307–leucine 347, glutamate 353–tyrosine 393, serine 400–serine 452, glutamine 456–leucine 495, and arginine 502–phenylalanine 542. A Phosphoserine modification is found at serine 693. Positions lysine 766–methionine 912 are disordered. The segment covering serine 784–histidine 794 has biased composition (basic residues). Residues threonine 795–glutamine 816 are compositionally biased toward polar residues. Residues glutamate 817 to threonine 828 are compositionally biased toward acidic residues. Low complexity predominate over residues serine 845–aspartate 858. The span at arginine 875–serine 884 shows a compositional bias: polar residues. 2 positions are modified to phosphoserine: serine 884 and serine 885. The span at lysine 897–glycine 907 shows a compositional bias: basic residues. The Bromo 1 domain maps to tryptophan 1136–glutamine 1243. Disordered regions lie at residues glutamate 1258–glycine 1291, glutamate 1321–proline 1366, isoleucine 1435–serine 1482, and serine 1517–alanine 1723. The segment covering proline 1260–serine 1276 has biased composition (acidic residues). In terms of domain architecture, Bromo 2 spans cysteine 1298–isoleucine 1427. A compositionally biased stretch (low complexity) spans proline 1333–proline 1348. Basic residues predominate over residues glutamine 1438–arginine 1450. 2 stretches are compositionally biased toward low complexity: residues serine 1451–serine 1463 and serine 1517–serine 1530. A phosphoserine mark is found at serine 1574 and serine 1576. The span at glycine 1584 to valine 1596 shows a compositional bias: basic and acidic residues. Over residues leucine 1598–glutamate 1623 the composition is skewed to low complexity. The span at serine 1624–serine 1640 shows a compositional bias: basic and acidic residues. Basic residues-rich tracts occupy residues arginine 1646–lysine 1663 and arginine 1681–arginine 1694. The residue at position 1760 (serine 1760) is a Phosphoserine.

In terms of biological role, plays a role in the regulation of cell morphology and cytoskeletal organization. Required in the control of cell shape. The sequence is that of Bromodomain and WD repeat-containing protein 3 (Brwd3) from Mus musculus (Mouse).